The primary structure comprises 162 residues: uncharacterized protein (162 aa).

The HTH asnC-type domain occupies 6–99; the sequence is LDDLDRAILK…YVTKTLSGFP (94 aa). Residues 25-44 constitute a DNA-binding region (H-T-H motif); that stretch reads IAEISNQLKKPESTVHFRIK.

This is an uncharacterized protein from Pyrococcus horikoshii (strain ATCC 700860 / DSM 12428 / JCM 9974 / NBRC 100139 / OT-3).